A 538-amino-acid polypeptide reads, in one-letter code: Guanine nucleotide-binding protein-like 3 (538 aa).

The segment covering 1–45 (MKRPKLKKASKRMTCHKRYKIQKKVREHHRKLRKEAKKRGHKKPK) has biased composition (basic residues). The segment at 1-125 (MKRPKLKKAS…KAKSGKQNPK (125 aa)) is disordered. Residues 2-46 (KRPKLKKASKRMTCHKRYKIQKKVREHHRKLRKEAKKRGHKKPKK) are basic. Residues 54 to 95 (APFKEALLREAELRKQQLEELKQQQKLDRQKEQERKRKLEIS) adopt a coiled-coil conformation. Residues 59 to 94 (ALLREAELRKQQLEELKQQQKLDRQKEQERKRKLEI) are compositionally biased toward basic and acidic residues. Lysine 79 bears the N6-acetyllysine mark. Lysine 91 participates in a covalent cross-link: Glycyl lysine isopeptide (Lys-Gly) (interchain with G-Cter in SUMO2). Phosphoserine occurs at positions 95 and 101. Residues 95–110 (SPDDEQSNVETQEESD) show a composition bias toward acidic residues. A compositionally biased stretch (basic residues) spans 115–125 (KKAKSGKQNPK). The CP-type G domain occupies 129-307 (CQELKKVIEA…IIDSPCFIIS (179 aa)). Residue 176–179 (NKSD) coordinates GTP. Glycyl lysine isopeptide (Lys-Gly) (interchain with G-Cter in SUMO2) cross-links involve residues lysine 177, lysine 248, lysine 262, and lysine 270. 256–263 (GFPNVGKS) contributes to the GTP binding site. The segment at 277 to 451 (VGVSMGLTRS…HLTNKILFRS (175 aa)) is intermediate. 300–303 (DSPC) provides a ligand contact to GTP. 2 stretches are compositionally biased toward basic and acidic residues: residues 460-473 (EEKDIPEESPKQTE) and 481-491 (QEHVTGEKNAE). Residues 460–532 (EEKDIPEESP…KMSEEDDAYD (73 aa)) are acidic. The interval 460–538 (EEKDIPEESP…DAYDFTTDYI (79 aa)) is disordered. Phosphoserine occurs at positions 493, 505, and 518. Basic and acidic residues predominate over residues 514 to 524 (PSDRSFILDKM).

The protein belongs to the TRAFAC class YlqF/YawG GTPase family. Interacts with MDM2; this interaction stabilizes MDM2. Interaction with MDM2 occurs in the nucleoplasm and is triggered by a nucleolar release mechanism, such as mitosis-induced nucleolar disassembly. May interact with p53/TP53 via its basic domain. This interaction is most probably indirect and mediated by MDM2-binding. As to expression, expressed in testis.

Its subcellular location is the nucleus. The protein localises to the nucleolus. Functionally, may be required to maintain the proliferative capacity of stem cells. Stabilizes MDM2 by preventing its ubiquitination, and hence proteasomal degradation. This is Guanine nucleotide-binding protein-like 3 (Gnl3) from Rattus norvegicus (Rat).